Reading from the N-terminus, the 85-residue chain is Probable weak neurotoxin 3FTx-Lio1 (85 aa).

Positions 1 to 18 are cleaved as a signal peptide; that stretch reads MKAVILSLVAAFLYSGYT. Disulfide bonds link Cys-21–Cys-42, Cys-24–Cys-29, Cys-35–Cys-60, Cys-64–Cys-75, and Cys-76–Cys-81.

It belongs to the three-finger toxin family. Ancestral subfamily. As to expression, expressed by the venom gland.

Its subcellular location is the secreted. This is Probable weak neurotoxin 3FTx-Lio1 from Erythrolamprus poecilogyrus (Water snake).